Here is a 122-residue protein sequence, read N- to C-terminus: uncharacterized protein (122 aa).

Residues 9–25 (AFPSPVFLGGVFFVFFF) form a helical membrane-spanning segment.

The protein localises to the cytoplasm. Its subcellular location is the nucleus. The protein resides in the membrane. This is an uncharacterized protein from Saccharomyces cerevisiae (strain ATCC 204508 / S288c) (Baker's yeast).